We begin with the raw amino-acid sequence, 126 residues long: Small ribosomal subunit protein uS12 (126 aa).

The interval 1–28 (MPTINQLVRKGRQSETTKSKSPALQDCP) is disordered. Residue D89 is modified to 3-methylthioaspartic acid. Residues 103-126 (DTQGVKDRKQARSKYGAKRAKAGK) form a disordered region. Basic residues predominate over residues 113–126 (ARSKYGAKRAKAGK).

This sequence belongs to the universal ribosomal protein uS12 family. In terms of assembly, part of the 30S ribosomal subunit. Contacts proteins S8 and S17. May interact with IF1 in the 30S initiation complex.

In terms of biological role, with S4 and S5 plays an important role in translational accuracy. Functionally, interacts with and stabilizes bases of the 16S rRNA that are involved in tRNA selection in the A site and with the mRNA backbone. Located at the interface of the 30S and 50S subunits, it traverses the body of the 30S subunit contacting proteins on the other side and probably holding the rRNA structure together. The combined cluster of proteins S8, S12 and S17 appears to hold together the shoulder and platform of the 30S subunit. This Paraburkholderia phytofirmans (strain DSM 17436 / LMG 22146 / PsJN) (Burkholderia phytofirmans) protein is Small ribosomal subunit protein uS12.